Here is a 490-residue protein sequence, read N- to C-terminus: 2-succinylbenzoate--CoA ligase (490 aa).

Belongs to the ATP-dependent AMP-binding enzyme family. MenE subfamily.

The catalysed reaction is 2-succinylbenzoate + ATP + CoA = 2-succinylbenzoyl-CoA + AMP + diphosphate. The protein operates within quinol/quinone metabolism; 1,4-dihydroxy-2-naphthoate biosynthesis; 1,4-dihydroxy-2-naphthoate from chorismate: step 5/7. It functions in the pathway quinol/quinone metabolism; menaquinone biosynthesis. Its function is as follows. Converts 2-succinylbenzoate (OSB) to 2-succinylbenzoyl-CoA (OSB-CoA). The sequence is that of 2-succinylbenzoate--CoA ligase from Geobacillus kaustophilus (strain HTA426).